Reading from the N-terminus, the 325-residue chain is MLVISANEQRNLVNMNEVIEYAALALKEFSAERTITPIRGSLPFANEQNTALIMPSVAEGLEALGVKIVTVVPQNKQIGKKTINGIVMLSDFQAGEPLALLEGSYLTMIRTGALSGVATKYLARHNAKTLCIIGTGEQAKGIAEAIFAVRDIEKVILYNRTEEKAYAFAQYIQEKFGKPAYVYKDPNEAVREADIIVTTTNATTPVFSEILQKGVHVNAVGSFRPSMQELPSHAIAKANKVVVESKEAALDETGDLQVPIKEGLFKANAIHAELGQIISGEKAGRENDEEITIFKSVGLAVVDIIVAKYLYERALEQGVGNKIEF.

This sequence belongs to the ornithine cyclodeaminase/mu-crystallin family.

The enzyme catalyses L-proline + NAD(+) = 1-pyrroline-2-carboxylate + NADH + H(+). It carries out the reaction L-proline + NADP(+) = 1-pyrroline-2-carboxylate + NADPH + H(+). Its function is as follows. Catalyzes the reduction of Delta(1)-pyrroline-2-carboxylate (Pyr2C) to L-proline, using preferentially NADPH over NADH as the electron donor. Is likely involved in a degradation pathway that converts trans-3-hydroxy-L-proline (t3LHyp) to L-proline, which allows B.cereus to grow on t3LHyp as a sole carbon source. This is Delta(1)-pyrroline-2-carboxylate reductase from Bacillus cereus (strain ATCC 14579 / DSM 31 / CCUG 7414 / JCM 2152 / NBRC 15305 / NCIMB 9373 / NCTC 2599 / NRRL B-3711).